The primary structure comprises 152 residues: MELPAVNLKVILLGHWLLTTWGCIVFSGSYAWANFTILALGVWAVAQRDSIDAISMFLGGLLATIFLDIVHISIFYPRAGLTDTGRFGAGMAILSLLLKPLSCCFVYHMYRQRGGFLGSSQDRSAYQTIDSAEAPANAFAVPEGRGQDARGY.

Over Met1–Cys23 the chain is Extracellular. The helical transmembrane segment at Ile24–Ala44 threads the bilayer. Over Val45–Ser55 the chain is Cytoplasmic. The helical transmembrane segment at Met56 to Tyr76 threads the bilayer. Topologically, residues Pro77–Arg86 are extracellular. Residues Phe87–Tyr107 traverse the membrane as a helical segment. Residues His108–Tyr152 lie on the Cytoplasmic side of the membrane. Ser119 and Ser120 each carry phosphoserine. Thr128 is subject to Phosphothreonine. Residue Ser131 is modified to Phosphoserine.

Interacts with RACK1, and with the carboxy-terminal region of AGTR1.

The protein localises to the endoplasmic reticulum membrane. Its subcellular location is the golgi apparatus membrane. It localises to the cytoplasmic vesicle membrane. Functionally, appears to be a negative regulator of type-1 angiotensin II receptor-mediated signaling by regulating receptor internalization as well as mechanism of receptor desensitization such as phosphorylation. Also induces a decrease in cell proliferation and angiotensin II-stimulated transcriptional activity. This chain is Type-1 angiotensin II receptor-associated protein (AGTRAP), found in Pongo abelii (Sumatran orangutan).